A 149-amino-acid chain; its full sequence is Nucleoside diphosphate kinase (149 aa).

Residues Lys-9, Phe-57, Arg-85, Thr-91, Arg-102, and Asn-112 each coordinate ATP. His-115 acts as the Pros-phosphohistidine intermediate in catalysis.

Belongs to the NDK family. In terms of assembly, homotetramer. The cofactor is Mg(2+).

It localises to the cytoplasm. The enzyme catalyses a 2'-deoxyribonucleoside 5'-diphosphate + ATP = a 2'-deoxyribonucleoside 5'-triphosphate + ADP. It catalyses the reaction a ribonucleoside 5'-diphosphate + ATP = a ribonucleoside 5'-triphosphate + ADP. In terms of biological role, major role in the synthesis of nucleoside triphosphates other than ATP. The ATP gamma phosphate is transferred to the NDP beta phosphate via a ping-pong mechanism, using a phosphorylated active-site intermediate. The polypeptide is Nucleoside diphosphate kinase (Nostoc punctiforme (strain ATCC 29133 / PCC 73102)).